Consider the following 398-residue polypeptide: Immunoglobulin heavy constant alpha 1 (398 aa).

Residues 1–364 (ASPTSPKVFP…TPGANLWPTT (364 aa)) are Extracellular-facing. The Ig-like 1 domain occupies 6–98 (PKVFPLSLCS…HYTNPSQDVT (93 aa)). Disulfide bonds link Cys26-Cys85 and Cys77-Cys101. Residues 96-122 (DVTVPCPVPSTPPTPSPSTPPTPSPSC) form a disordered region. Over residues 101 to 119 (CPVPSTPPTPSPSTPPTPS) the composition is skewed to pro residues. Ser105 carries an O-linked (GalNAc...) serine glycan. 2 O-linked (GalNAc...) threonine glycosylation sites follow: Thr106 and Thr109. Residues Ser111 and Ser113 are each glycosylated (O-linked (GalNAc...) serine). Thr114 and Thr117 each carry an O-linked (GalNAc...) threonine glycan. Ser119 and Ser121 each carry an O-linked (GalNAc...) serine glycan. 3 cysteine pairs are disulfide-bonded: Cys123–Cys180, Cys147–Cys204, and Cys250–Cys313. Ig-like domains follow at residues 125-220 (PRLS…ATLS) and 228-330 (PEVH…KTID). A glycan (N-linked (GlcNAc...) (complex) asparagine) is linked at Asn144. The N-linked (GlcNAc...) (complex) asparagine glycan is linked to Pro340. Glu352 serves as a coordination point for 3-hydroxy-L-kynurenine. Residues 365–383 (ITFLTLFLLSLFYSTALTV) traverse the membrane as a helical segment. Residues 384–398 (TSVRGPSGNREGPQY) are Cytoplasmic-facing.

In terms of assembly, immunoglobulins are composed of two identical heavy chains and two identical light chains; disulfide-linked. Monomeric or polymeric. Part of the secretory IgA (sIgA) complex that consists of two, four or five IgA monomers, and two additional non-Ig polypeptides, namely the JCHAIN and the secretory component (the proteolytic product of PIGR). 3-Hydroxykynurenine, an oxidized tryptophan metabolite that is common in biological fluids, reacts with alpha-1-microglobulin to form heterogeneous polycyclic chromophores including hydroxanthommatin. The chromophore reacts with accessible cysteines forming non-reducible thioether cross-links with Ig alpha-1 chain C region Cys-352. Post-translationally, N- and O-glycosylated. N-glycan at Asn-144: Hex5HexNAc4.

Its subcellular location is the secreted. It is found in the cell membrane. Its function is as follows. Constant region of immunoglobulin heavy chains. Immunoglobulins, also known as antibodies, are membrane-bound or secreted glycoproteins produced by B lymphocytes. In the recognition phase of humoral immunity, the membrane-bound immunoglobulins serve as receptors which, upon binding of a specific antigen, trigger the clonal expansion and differentiation of B lymphocytes into immunoglobulins-secreting plasma cells. Secreted immunoglobulins mediate the effector phase of humoral immunity, which results in the elimination of bound antigens. The antigen binding site is formed by the variable domain of one heavy chain, together with that of its associated light chain. Thus, each immunoglobulin has two antigen binding sites with remarkable affinity for a particular antigen. The variable domains are assembled by a process called V-(D)-J rearrangement and can then be subjected to somatic hypermutations which, after exposure to antigen and selection, allow affinity maturation for a particular antigen. Ig alpha is the major immunoglobulin class in body secretions. This is Immunoglobulin heavy constant alpha 1 from Homo sapiens (Human).